A 425-amino-acid chain; its full sequence is GTPase Obg (425 aa).

The 158-residue stretch at 1–158 (MFIDKARIFV…RWITLELKMI (158 aa)) folds into the Obg domain. The 172-residue stretch at 159 to 330 (ADVGLLGFPN…VIAYVSKMLK (172 aa)) folds into the OBG-type G domain. GTP-binding positions include 165–172 (GFPNVGKS), 190–194 (FTTLT), 212–215 (DIPG), 282–285 (NKFD), and 311–313 (SAA). Serine 172 and threonine 192 together coordinate Mg(2+). One can recognise an OCT domain in the interval 344–425 (YRPELDIGTE…IYELEFEFYN (82 aa)).

The protein belongs to the TRAFAC class OBG-HflX-like GTPase superfamily. OBG GTPase family. Monomer. Requires Mg(2+) as cofactor.

It is found in the cytoplasm. Its function is as follows. An essential GTPase which binds GTP, GDP and possibly (p)ppGpp with moderate affinity, with high nucleotide exchange rates and a fairly low GTP hydrolysis rate. Plays a role in control of the cell cycle, stress response, ribosome biogenesis and in those bacteria that undergo differentiation, in morphogenesis control. The protein is GTPase Obg of Clostridioides difficile (strain 630) (Peptoclostridium difficile).